Here is a 146-residue protein sequence, read N- to C-terminus: UPF0306 protein HD_1359 (146 aa).

Belongs to the UPF0306 family.

The protein is UPF0306 protein HD_1359 of Haemophilus ducreyi (strain 35000HP / ATCC 700724).